A 52-amino-acid chain; its full sequence is Protein PROPEP914 (52 aa).

The disordered stretch occupies residues 25–52 (DKPQDDMPQTPNSQVTIVSRDHPRGGNY). The segment covering 31–41 (MPQTPNSQVTI) has biased composition (polar residues). The segment covering 43 to 52 (SRDHPRGGNY) has biased composition (basic and acidic residues).

Expressed in roots. Barely detected in flowers.

Functionally, produces a rapid alkalinization of the cellular media and the induction of defense-related genes, including chitinase 1b, chalcone synthase and CYP93A1. Not active in tobacco or Arabidopsis. The receptor for GmPep914 is probably different from the receptor for GmSubPep. This chain is Protein PROPEP914 (PROPEP914), found in Glycine max (Soybean).